The following is a 351-amino-acid chain: Small ribosomal subunit biogenesis GTPase RsgA (351 aa).

Positions 107–277 constitute a CP-type G domain; that stretch reads ENLLQRPDNF…LIDSPGIREF (171 aa). Residues 163 to 166 and 219 to 227 each bind GTP; these read NKTD and GQSGVGKSS. Residues cysteine 301, cysteine 306, histidine 308, and cysteine 314 each coordinate Zn(2+).

This sequence belongs to the TRAFAC class YlqF/YawG GTPase family. RsgA subfamily. As to quaternary structure, monomer. Associates with 30S ribosomal subunit, binds 16S rRNA. It depends on Zn(2+) as a cofactor.

It localises to the cytoplasm. In terms of biological role, one of several proteins that assist in the late maturation steps of the functional core of the 30S ribosomal subunit. Helps release RbfA from mature subunits. May play a role in the assembly of ribosomal proteins into the subunit. Circularly permuted GTPase that catalyzes slow GTP hydrolysis, GTPase activity is stimulated by the 30S ribosomal subunit. The protein is Small ribosomal subunit biogenesis GTPase RsgA of Marinobacter nauticus (strain ATCC 700491 / DSM 11845 / VT8) (Marinobacter aquaeolei).